The chain runs to 328 residues: D-cysteine desulfhydrase (328 aa).

An N6-(pyridoxal phosphate)lysine modification is found at lysine 51.

Belongs to the ACC deaminase/D-cysteine desulfhydrase family. Homodimer. Pyridoxal 5'-phosphate serves as cofactor.

It catalyses the reaction D-cysteine + H2O = hydrogen sulfide + pyruvate + NH4(+) + H(+). Its function is as follows. Catalyzes the alpha,beta-elimination reaction of D-cysteine and of several D-cysteine derivatives. It could be a defense mechanism against D-cysteine. This Salmonella schwarzengrund (strain CVM19633) protein is D-cysteine desulfhydrase.